A 248-amino-acid polypeptide reads, in one-letter code: MQAPQTTVDPSEIAKFEAMAAEWWDENGKFKPLHMLNPCRLDYITTQIAGEFDRDLASPEPFKGLRILDIGCGGGLLAEPMARLGADVVGADAAERNIPVARVHAEQSGLTIDYRHTTAEALAAEGEQFDVVLNMEVVEHVASPIDYLIACRQLLKPGGLQVCSTLNRNPKSYVMAIIGAEHVMRWLPKGTHEWSKFITPDELYDLLRQSGMDPVDRKGFVFNPISWSWKLSGRDLSVNYVTASVKPA.

Residues Arg-40, Gly-71, Asp-92, and Met-135 each coordinate S-adenosyl-L-methionine.

It belongs to the methyltransferase superfamily. UbiG/COQ3 family.

The catalysed reaction is a 3-demethylubiquinol + S-adenosyl-L-methionine = a ubiquinol + S-adenosyl-L-homocysteine + H(+). It carries out the reaction a 3-(all-trans-polyprenyl)benzene-1,2-diol + S-adenosyl-L-methionine = a 2-methoxy-6-(all-trans-polyprenyl)phenol + S-adenosyl-L-homocysteine + H(+). The protein operates within cofactor biosynthesis; ubiquinone biosynthesis. Functionally, O-methyltransferase that catalyzes the 2 O-methylation steps in the ubiquinone biosynthetic pathway. In Roseobacter denitrificans (strain ATCC 33942 / OCh 114) (Erythrobacter sp. (strain OCh 114)), this protein is Ubiquinone biosynthesis O-methyltransferase.